The primary structure comprises 344 residues: Ribosomal RNA large subunit methyltransferase Cfr (344 aa).

Catalysis depends on Glu90, which acts as the Proton acceptor. Positions 97 to 330 (KQGWESFCIS…ATVRTQFGSE (234 aa)) constitute a Radical SAM core domain. Cys104 and Cys335 are disulfide-bonded. Cys111, Cys115, and Cys118 together coordinate [4Fe-4S] cluster. S-adenosyl-L-methionine contacts are provided by residues 157–158 (GE), Ser188, 211–213 (SLH), and Asn292. The active-site S-methylcysteine intermediate is the Cys335.

This sequence belongs to the radical SAM superfamily. RlmN family. Cfr subfamily. [4Fe-4S] cluster serves as cofactor.

The protein resides in the cytoplasm. It catalyses the reaction adenosine(2503) in 23S rRNA + 2 reduced [2Fe-2S]-[ferredoxin] + 2 S-adenosyl-L-methionine = 8-methyladenosine(2503) in 23S rRNA + 5'-deoxyadenosine + L-methionine + 2 oxidized [2Fe-2S]-[ferredoxin] + S-adenosyl-L-homocysteine. In terms of biological role, specifically methylates position 8 of adenine 2503 in 23S rRNA. Confers resistance to some classes of antibiotics. The chain is Ribosomal RNA large subunit methyltransferase Cfr from Clostridium botulinum (strain Hall / ATCC 3502 / NCTC 13319 / Type A).